Reading from the N-terminus, the 351-residue chain is MGHRKLASPRRGSAGLRPRKRSSELLPTPRTWPQINSPNPKLLGFVGYKVGMSHVFMIDDWPNSPTNGKEIYMPVTVLEVPPIIPLALRAYAVDGKGEPNVITEYWSPSSLQFLDITRRIHSLSSFLKNDESKKKFEEKFGSKLDLIKSNLDRIVYFRLLVATQPRKIPSLGKKVPDLVEIQIGGGEKKAQLDYALNVLGKEISIKDVFKEGQLIDVVGVTKGKGFAGVIKRYSVVELPRWHKHRKGSRKIGTRGPSLGTPSYTPQPGQLGFHRRTEYNKRIIKIGDDPKEINPAGGFVRYGIVRNTYILLEGSILGSKKRPIFLREAVRPSYVFENAPKITYVNLLSKQG.

2 disordered regions span residues 1–31 (MGHR…TPRT) and 246–271 (KGSR…GQLG).

It belongs to the universal ribosomal protein uL3 family. Part of the 50S ribosomal subunit. Forms a cluster with proteins L14 and L24e.

Functionally, one of the primary rRNA binding proteins, it binds directly near the 3'-end of the 23S rRNA, where it nucleates assembly of the 50S subunit. The polypeptide is Large ribosomal subunit protein uL3 (Saccharolobus islandicus (strain Y.N.15.51 / Yellowstone #2) (Sulfolobus islandicus)).